The following is a 902-amino-acid chain: Glutamate receptor 4 (902 aa).

A signal peptide spans M1–M20. Over A22–A544 the chain is Extracellular. N-linked (GlcNAc...) asparagine glycans are attached at residues N52, N56, N258, N371, N407, and N414. The cysteines at positions 84 and 331 are disulfide-linked. Positions 500, 502, and 507 each coordinate L-glutamate. The helical transmembrane segment at Y545–V565 threads the bilayer. At S566–E592 the chain is on the cytoplasmic side. Positions F593–Q608 form an intramembrane region, helical; Pore-forming. An intramembrane segment occupies Q609–C611. The S-palmitoyl cysteine moiety is linked to residue C611. Over D612 to S617 the chain is Cytoplasmic. The helical transmembrane segment at L618–Y638 threads the bilayer. Topologically, residues T639–N813 are extracellular. L-glutamate is bound by residues S676, T677, and E727. An intrachain disulfide couples C740 to C795. Residues V814–I834 form a helical membrane-spanning segment. Residues E835–P902 lie on the Cytoplasmic side of the membrane. A lipid anchor (S-palmitoyl cysteine) is attached at C837. Position 862 is a phosphoserine; by PKC/PRKCG (S862).

Belongs to the glutamate-gated ion channel (TC 1.A.10.1) family. GRIA4 subfamily. In terms of assembly, homotetramer or heterotetramer of pore-forming glutamate receptor subunits. Tetramers may be formed by the dimerization of dimers. Interacts with EPB41L1 via its C-terminus. Isoform 3 interacts with PICK1. Found in a complex with GRIA1, GRIA2, GRIA3, CNIH2, CNIH3, CACNG2, CACNG3, CACNG4, CACNG5, CACNG7 and CACNG8. Interacts with CACNG5 and PRKCG. Found in a complex with GRIA1, GRIA2, GRIA3, DLG4, CACNG8 and CNIH2. Post-translationally, palmitoylated. Depalmitoylated upon L-glutamate stimulation. ZDHHC3/GODZ specifically palmitoylates Cys-611, which leads to Golgi retention and decreased cell surface expression. In contrast, Cys-837 palmitoylation does not affect cell surface expression but regulates stimulation-dependent endocytosis. In terms of processing, phosphorylated at Ser-862 by PRKCG; phosphorylation increases plasma membrane-associated GRI4 expression. Detected in cerebellum.

It is found in the cell membrane. Its subcellular location is the postsynaptic cell membrane. It localises to the cell projection. The protein localises to the dendrite. The enzyme catalyses Ca(2+)(in) = Ca(2+)(out). It carries out the reaction Na(+)(in) = Na(+)(out). The catalysed reaction is Mg(2+)(in) = Mg(2+)(out). In terms of biological role, ionotropic glutamate receptor that functions as a ligand-gated cation channel, gated by L-glutamate and glutamatergic agonists such as alpha-amino-3-hydroxy-5-methyl-4-isoxazolepropionic acid (AMPA), quisqualic acid, and kainic acid. L-glutamate acts as an excitatory neurotransmitter at many synapses in the central nervous system and plays an important role in fast excitatory synaptic transmission. Binding of the excitatory neurotransmitter L-glutamate induces a conformation change, leading to the opening of the cation channel, and thereby converts the chemical signal to an electrical impulse upon entry of monovalent and divalent cations such as sodium and calcium. The receptor then desensitizes rapidly and enters a transient inactive state, characterized by the presence of bound agonist. In the presence of CACNG8, shows resensitization which is characterized by a delayed accumulation of current flux upon continued application of L-glutamate. This Rattus norvegicus (Rat) protein is Glutamate receptor 4.